Consider the following 143-residue polypeptide: Transcriptional regulator MraZ (143 aa).

SpoVT-AbrB domains lie at 5 to 47 (TYTP…PKEE) and 76 to 119 (ADEQ…DAQA).

This sequence belongs to the MraZ family. In terms of assembly, forms oligomers.

The protein resides in the cytoplasm. Its subcellular location is the nucleoid. This Corynebacterium efficiens (strain DSM 44549 / YS-314 / AJ 12310 / JCM 11189 / NBRC 100395) protein is Transcriptional regulator MraZ.